The following is a 328-amino-acid chain: UPF0421 protein SERP1427 (328 aa).

4 consecutive transmembrane segments (helical) span residues 26–46 (LFCMLLNLTPIFAILTAIVTI), 61–81 (LPATVIGALFAVVFTYVFGDQ), 109–129 (AVLTSVAMIPGIHEAYVFNFF), and 132–152 (LLTALIGLVTAGLVNFIILPP).

The protein belongs to the UPF0421 family.

It is found in the cell membrane. This Staphylococcus epidermidis (strain ATCC 35984 / DSM 28319 / BCRC 17069 / CCUG 31568 / BM 3577 / RP62A) protein is UPF0421 protein SERP1427.